A 644-amino-acid polypeptide reads, in one-letter code: MFQDNPLLAQLKQQLHSQTPRAEGVVKATEKGFGFLEVDAQKSYFIPPPQMKKVMHGDRIIAVIHSEKERESAEPEELVEPFLTRFVGKVQGKNDRLAIVPDHPLLKDAIPCRAARGLNHEFKEGDWAVAEMRRHPLKGDRSFYAELTQYITFGDDHFVPWWVTLARHNLEKEAPDGVATEMLDEGLVREDLTALDFVTIDSASTEDMDDALFAKALPDDKLQLIVAIADPTAWIAEGSKLDKAAKIRAFTNYLPGFNIPMLPRELSDDLCSLRANEVRPVLACRMTLSADGTIEDNIEFFAATIESKAKLVYDQVSDWLENTGDWQPESEAIAEQVRLLAQICQRRGEWRHNHALVFKDRPDYRFILGEKGEVLDIVAEPRRIANRIVEEAMIAANICAARVLRDKLGFGIYNVHMGFDPANADALAALLKTHGLHVDAEEVLTLDGFCKLRRELDAQPTGFLDSRIRRFQSFAEISTEPGPHFGLGLEAYATWTSPIRKYGDMINHRLLKAVIKGETATRPQDEITVQMAERRRLNRMAERDVGDWLYARFLKDKAGTDTRFAAEIVDISRGGMRVRLVDNGAIAFIPAPFLHAVRDELVCSQENGTVQIKGETVYKVTDVIDVTIAEVRMETRSIIARPVA.

Residues 189–516 form the RNB domain; that stretch reads REDLTALDFV…NHRLLKAVIK (328 aa). One can recognise an S1 motif domain in the interval 561–643; sequence DTRFAAEIVD…ETRSIIARPV (83 aa).

Belongs to the RNR ribonuclease family. RNase II subfamily.

The protein localises to the cytoplasm. The catalysed reaction is Exonucleolytic cleavage in the 3'- to 5'-direction to yield nucleoside 5'-phosphates.. In terms of biological role, involved in mRNA degradation. Hydrolyzes single-stranded polyribonucleotides processively in the 3' to 5' direction. The sequence is that of Exoribonuclease 2 from Escherichia coli O139:H28 (strain E24377A / ETEC).